The chain runs to 266 residues: Non-structural maintenance of chromosomes element 1 homolog (266 aa).

The interval Met1 to Ala102 is interaction with NSMCE3. The segment at Cys191–Asn232 adopts an RING-type; atypical zinc-finger fold. The interval Glu246 to His266 is disordered. Ser251 is subject to Phosphoserine. Residues Ser256–His266 show a composition bias toward basic residues.

Belongs to the NSE1 family. As to quaternary structure, component of the SMC5-SMC6 complex which consists at least of SMC5, SMC6, NSMCE2, NSMCE1, NSMCE4A or EID3 and NSMCE3. NSMCE1, NSMCE4A or EID3 and NSMCE3 probably form a subcomplex that bridges the head domains of the SMC5-SMC6 heterodimer. Interacts with NSMCE3. Interacts with MAGEF1. In terms of processing, ubiquitinated.

It is found in the nucleus. The protein localises to the chromosome. Its subcellular location is the telomere. The catalysed reaction is S-ubiquitinyl-[E2 ubiquitin-conjugating enzyme]-L-cysteine + [acceptor protein]-L-lysine = [E2 ubiquitin-conjugating enzyme]-L-cysteine + N(6)-ubiquitinyl-[acceptor protein]-L-lysine.. Functionally, RING-type zinc finger-containing E3 ubiquitin ligase that assembles with melanoma antigen protein (MAGE) to catalyze the direct transfer of ubiquitin from E2 ubiquitin-conjugating enzyme to a specific substrate. Within MAGE-RING ubiquitin ligase complex, MAGE stimulates and specifies ubiquitin ligase activity likely through recruitment and/or stabilization of the E2 ubiquitin-conjugating enzyme at the E3:substrate complex. Involved in maintenance of genome integrity, DNA damage response and DNA repair. NSMCE3/MAGEG1 and NSMCE1 ubiquitin ligase are components of SMC5-SMC6 complex and may positively regulate homologous recombination-mediated DNA repair. MAGEF1-NSMCE1 ubiquitin ligase promotes proteasomal degradation of MMS19, a key component of the cytosolic iron-sulfur protein assembly (CIA) machinery. Down-regulation of MMS19 impairs the activity of several DNA repair and metabolism enzymes such as ERCC2/XPD, FANCJ, RTEL1 and POLD1 that require iron-sulfur clusters as cofactors. The protein is Non-structural maintenance of chromosomes element 1 homolog of Homo sapiens (Human).